Here is a 455-residue protein sequence, read N- to C-terminus: UDP-N-acetylmuramoylalanine--D-glutamate ligase (455 aa).

117-123 (GSAGKTT) lines the ATP pocket.

This sequence belongs to the MurCDEF family.

Its subcellular location is the cytoplasm. It catalyses the reaction UDP-N-acetyl-alpha-D-muramoyl-L-alanine + D-glutamate + ATP = UDP-N-acetyl-alpha-D-muramoyl-L-alanyl-D-glutamate + ADP + phosphate + H(+). Its pathway is cell wall biogenesis; peptidoglycan biosynthesis. Functionally, cell wall formation. Catalyzes the addition of glutamate to the nucleotide precursor UDP-N-acetylmuramoyl-L-alanine (UMA). This Symbiobacterium thermophilum (strain DSM 24528 / JCM 14929 / IAM 14863 / T) protein is UDP-N-acetylmuramoylalanine--D-glutamate ligase.